The chain runs to 84 residues: UPF0457 protein BCE33L2961 (84 aa).

It belongs to the UPF0457 family.

The chain is UPF0457 protein BCE33L2961 from Bacillus cereus (strain ZK / E33L).